Consider the following 281-residue polypeptide: Phosphonates import ATP-binding protein PhnC 2 (281 aa).

Residues 4 to 238 (LTVDNVTKTY…LVDDLYGNVE (235 aa)) form the ABC transporter domain. 35–42 (GESGAGKS) contacts ATP. The segment at 243 to 281 (ATDNSDNSTVDTSDGTRYDTETGSDGTDEVDVIGRQVES) is disordered. Over residues 244 to 255 (TDNSDNSTVDTS) the composition is skewed to low complexity.

It belongs to the ABC transporter superfamily. Phosphonates importer (TC 3.A.1.9.1) family. In terms of assembly, the complex is composed of two ATP-binding proteins (PhnC), two transmembrane proteins (PhnE) and a solute-binding protein (PhnD).

Its subcellular location is the cell membrane. The catalysed reaction is phosphonate(out) + ATP + H2O = phosphonate(in) + ADP + phosphate + H(+). Its function is as follows. Part of the ABC transporter complex PhnCDE involved in phosphonates import. Responsible for energy coupling to the transport system. In Haloquadratum walsbyi (strain DSM 16790 / HBSQ001), this protein is Phosphonates import ATP-binding protein PhnC 2.